The sequence spans 176 residues: Ribosome maturation factor RimM (176 aa).

In terms of domain architecture, PRC barrel spans 100–172; sequence PDTYYDHQLV…IVEIDPPHGL (73 aa).

It belongs to the RimM family. Binds ribosomal protein uS19.

It is found in the cytoplasm. Functionally, an accessory protein needed during the final step in the assembly of 30S ribosomal subunit, possibly for assembly of the head region. Essential for efficient processing of 16S rRNA. May be needed both before and after RbfA during the maturation of 16S rRNA. It has affinity for free ribosomal 30S subunits but not for 70S ribosomes. This chain is Ribosome maturation factor RimM, found in Mycobacterium bovis (strain ATCC BAA-935 / AF2122/97).